The sequence spans 297 residues: uncharacterized protein (297 aa).

Glutamate 46 is an active-site residue.

The protein belongs to the PhzF family. In terms of assembly, homodimer and homotetramer.

This is an uncharacterized protein from Escherichia coli O157:H7.